The chain runs to 944 residues: Translation initiation factor IF-2 (944 aa).

The interval 61-281 is disordered; it reads IQANQPAKNP…TAKNNKSHKI (221 aa). Positions 132-150 are enriched in polar residues; it reads TFENQTPPTENTPKVVSHS. Residues 151–169 show a composition bias toward basic and acidic residues; sequence QIEKAKQKLQEIQKSREAL. Positions 175-185 are enriched in low complexity; sequence SNANNASNTNN. Positions 186 to 203 are enriched in basic and acidic residues; the sequence is AKKEISEVKKQEQEIKRH. Positions 204–215 are enriched in basic residues; it reads ENIKRRTGFRVI. Residues 244 to 259 show a composition bias toward basic and acidic residues; it reads EDIKKEWQEKDKQEAK. The tr-type G domain occupies 443–612; that stretch reads ERPPVVTIMG…LIQADIMELK (170 aa). The tract at residues 452 to 459 is G1; the sequence is GHVDHGKT. Position 452–459 (452–459) interacts with GTP; sequence GHVDHGKT. The G2 stretch occupies residues 477-481; sequence GITQH. The tract at residues 498 to 501 is G3; it reads DTPG. Residues 498-502 and 552-555 contribute to the GTP site; these read DTPGH and NKMD. A G4 region spans residues 552 to 555; the sequence is NKMD. The segment at 588–590 is G5; sequence SAK.

The protein belongs to the TRAFAC class translation factor GTPase superfamily. Classic translation factor GTPase family. IF-2 subfamily.

The protein resides in the cytoplasm. In terms of biological role, one of the essential components for the initiation of protein synthesis. Protects formylmethionyl-tRNA from spontaneous hydrolysis and promotes its binding to the 30S ribosomal subunits. Also involved in the hydrolysis of GTP during the formation of the 70S ribosomal complex. The protein is Translation initiation factor IF-2 of Helicobacter pylori (strain HPAG1).